The sequence spans 193 residues: Xanthine phosphoribosyltransferase (193 aa).

Positions 20 and 27 each coordinate xanthine. Residue 128–132 participates in 5-phospho-alpha-D-ribose 1-diphosphate binding; sequence ANGQA. A xanthine-binding site is contributed by lysine 156.

The protein belongs to the purine/pyrimidine phosphoribosyltransferase family. Xpt subfamily. Homodimer.

The protein localises to the cytoplasm. It carries out the reaction XMP + diphosphate = xanthine + 5-phospho-alpha-D-ribose 1-diphosphate. It functions in the pathway purine metabolism; XMP biosynthesis via salvage pathway; XMP from xanthine: step 1/1. In terms of biological role, converts the preformed base xanthine, a product of nucleic acid breakdown, to xanthosine 5'-monophosphate (XMP), so it can be reused for RNA or DNA synthesis. This is Xanthine phosphoribosyltransferase from Streptococcus pneumoniae serotype 19F (strain G54).